We begin with the raw amino-acid sequence, 117 residues long: Appetite-regulating hormone (117 aa).

An N-terminal signal peptide occupies residues 1–23; sequence MPSLGTMCSLLLFSVLWVDLAMA. Residue Ser26 is the site of O-decanoyl serine; alternate attachment. Ser26 is lipidated: O-hexanoyl serine; alternate. The O-octanoyl serine; alternate moiety is linked to residue Ser26. A disordered region spans residues 30–68; sequence PEHQKLQQRKESKKPPAKLQPRALEGSLGPEDTSQVEEA. The segment covering 31–43 has biased composition (basic and acidic residues); sequence EHQKLQQRKESKK. Positions 52-75 are cleaved as a propeptide — removed in mature form; that stretch reads ALEGSLGPEDTSQVEEAEDELEIR. A Leucine amide modification is found at Leu98. The propeptide at 99–117 is removed in mature form; the sequence is GKFLQEVLWEDTNEALADE.

This sequence belongs to the motilin family. Post-translationally, O-octanoylated by GOAT/MBOAT4. O-octanoylation is essential for ghrelin activity. Amidation of Leu-98 is essential for obestatin activity.

It is found in the secreted. Ghrelin is the ligand for growth hormone secretagogue receptor type 1 (GHSR). Induces the release of growth hormone from the pituitary. Has an appetite-stimulating effect, induces adiposity and stimulates gastric acid secretion. Involved in growth regulation. Functionally, obestatin may be the ligand for GPR39. May have an appetite-reducing effect resulting in decreased food intake. May reduce gastric emptying activity and jejunal motility. This Canis lupus familiaris (Dog) protein is Appetite-regulating hormone (GHRL).